The chain runs to 309 residues: Ribonuclease Z (309 aa).

Residues His-63, His-65, Asp-67, His-68, His-145, Asp-216, and His-274 each coordinate Zn(2+). The active-site Proton acceptor is Asp-67.

Belongs to the RNase Z family. In terms of assembly, homodimer. It depends on Zn(2+) as a cofactor.

The catalysed reaction is Endonucleolytic cleavage of RNA, removing extra 3' nucleotides from tRNA precursor, generating 3' termini of tRNAs. A 3'-hydroxy group is left at the tRNA terminus and a 5'-phosphoryl group is left at the trailer molecule.. Functionally, zinc phosphodiesterase, which displays some tRNA 3'-processing endonuclease activity. Probably involved in tRNA maturation, by removing a 3'-trailer from precursor tRNA. In Streptococcus uberis (strain ATCC BAA-854 / 0140J), this protein is Ribonuclease Z.